Consider the following 85-residue polypeptide: Cell division topological specificity factor (85 aa).

The protein belongs to the MinE family.

In terms of biological role, prevents the cell division inhibition by proteins MinC and MinD at internal division sites while permitting inhibition at polar sites. This ensures cell division at the proper site by restricting the formation of a division septum at the midpoint of the long axis of the cell. In Thioalkalivibrio sulfidiphilus (strain HL-EbGR7), this protein is Cell division topological specificity factor.